The sequence spans 300 residues: NAD kinase (300 aa).

Catalysis depends on aspartate 78, which acts as the Proton acceptor. Residues 78–79 (DG), 152–153 (ND), histidine 163, arginine 180, aspartate 182, and 193–198 (TAYALS) contribute to the NAD(+) site.

Belongs to the NAD kinase family. A divalent metal cation is required as a cofactor.

The protein localises to the cytoplasm. It catalyses the reaction NAD(+) + ATP = ADP + NADP(+) + H(+). Involved in the regulation of the intracellular balance of NAD and NADP, and is a key enzyme in the biosynthesis of NADP. Catalyzes specifically the phosphorylation on 2'-hydroxyl of the adenosine moiety of NAD to yield NADP. This is NAD kinase from Alcanivorax borkumensis (strain ATCC 700651 / DSM 11573 / NCIMB 13689 / SK2).